A 303-amino-acid polypeptide reads, in one-letter code: Regulatory protein PocR (303 aa).

The HTH araC/xylS-type domain maps to 195–293; the sequence is KKALRYIDAH…QVTPQAYRQQ (99 aa). 2 consecutive DNA-binding regions (H-T-H motif) follow at residues 212–233 and 260–283; these read EDVA…KKYQ and IASI…RQTY.

Its pathway is cofactor biosynthesis; adenosylcobalamin biosynthesis [regulation]. It participates in polyol metabolism; 1,2-propanediol degradation [regulation]. In terms of biological role, positive regulatory protein of pdu and cob operons. Positively autoregulates its own expression. This Salmonella typhimurium (strain LT2 / SGSC1412 / ATCC 700720) protein is Regulatory protein PocR (pocR).